The following is a 585-amino-acid chain: NADP-reducing hydrogenase subunit HndD (585 aa).

Residues 2-85 form the 2Fe-2S ferredoxin-type domain; the sequence is SMLTITIDGK…NMVVKTNSLR (84 aa). Residues cysteine 36, cysteine 52, cysteine 55, and cysteine 69 each coordinate [2Fe-2S] cluster. Residues 85 to 124 enclose the 4Fe-4S His(Cys)3-ligated-type domain; that stretch reads RVLNARRTVLELLLSDHPKDCLVCAKSGECELQTLAERFG. [4Fe-4S] cluster-binding residues include histidine 101, cysteine 105, cysteine 108, and cysteine 114. 4Fe-4S ferredoxin-type domains are found at residues 144–174 and 185–216; these read ASIIRDMDKCIMCRRCETMCNTVQTCGVLSG and PAFEMNLADTVCTNCGQCVAVCPTGALVEHEY.

Heterotetramer composed of HndA, HndB, HndC and HndD subunits. HndD is probably the hydrogenase subunit. It depends on [4Fe-4S] cluster as a cofactor.

It carries out the reaction H2 + NADP(+) = NADPH + H(+). Its activity is regulated as follows. Inhibited by oxygen. Catalyzes the reduction of NADP in the presence of molecular H(2) to yield NADPH. This is NADP-reducing hydrogenase subunit HndD (hndD) from Solidesulfovibrio fructosivorans (Desulfovibrio fructosivorans).